Reading from the N-terminus, the 357-residue chain is Alanine racemase (357 aa).

Lys-33 (proton acceptor; specific for D-alanine) is an active-site residue. Lys-33 carries the post-translational modification N6-(pyridoxal phosphate)lysine. A substrate-binding site is contributed by Arg-129. Tyr-253 functions as the Proton acceptor; specific for L-alanine in the catalytic mechanism. Residue Met-301 coordinates substrate.

It belongs to the alanine racemase family. Pyridoxal 5'-phosphate is required as a cofactor.

It catalyses the reaction L-alanine = D-alanine. The protein operates within amino-acid biosynthesis; D-alanine biosynthesis; D-alanine from L-alanine: step 1/1. In terms of biological role, catalyzes the interconversion of L-alanine and D-alanine. May also act on other amino acids. This is Alanine racemase (alr) from Pseudomonas entomophila (strain L48).